Consider the following 570-residue polypeptide: MRARSALPRSALPRLLLPLLLLPAAGPAQFHGEKGISIPDHGFCQPISIPLCTDIAYNQTIMPNLLGHTNQEDAGLEVHQFYPLVKVQCSPELRFFLCSMYAPVCTVLEQAIPPCRSICERARQGCEALMNKFGFQWPERLRCEHFPRHGAEQICVGQNHSEDGTPALLTTAPPSGLQPGAGGTPGGPGGGGAPPRYATLEHPFHCPRVLKVPSYLSYKFLGERDCAAPCEPARPDGSMFFSHHHTRFARLWILTWSVLCCASTFFTVTTSLVAMQRFRYPERPIIFLSGCYTMVSVAYIAGFVLQERVVCNERFSEDGYRTVGQGTKKEGCTILFMMLYFFSMASSIWWVILSLTWFLAAGMKWGHAAIEANSQYFHLAAWAVPAVKTITILAMGQIDGDLLSGVCFVGLNRLDPLRGFVLAPLFVYLFIGTSFLLAGFVSLFRIRTIMKHDGTKTEPLERLMVRIGVFSVLYTVPATIVIACYFYEQAFREHWERSWVSQHCKSLAIPCPAHYTPRTSPDFTVYMIKYLMTLIVGITSGFWIWSGKTLHSWRKFYTRLTNSRHGETTV.

Residues 1-28 (MRARSALPRSALPRLLLPLLLLPAAGPA) form the signal peptide. Topologically, residues 29-252 (QFHGEKGISI…HHHTRFARLW (224 aa)) are extracellular. Residues 39-158 (PDHGFCQPIS…HGAEQICVGQ (120 aa)) enclose the FZ domain. 5 disulfide bridges follow: Cys44–Cys105, Cys52–Cys98, Cys89–Cys126, Cys115–Cys155, and Cys119–Cys143. The N-linked (GlcNAc...) asparagine glycan is linked to Asn58. N-linked (GlcNAc...) asparagine glycosylation is present at Asn159. The segment at 166-194 (PALLTTAPPSGLQPGAGGTPGGPGGGGAP) is disordered. The segment covering 179–193 (PGAGGTPGGPGGGGA) has biased composition (gly residues). The helical transmembrane segment at 253-273 (ILTWSVLCCASTFFTVTTSLV) threads the bilayer. Over 274-284 (AMQRFRYPERP) the chain is Cytoplasmic. A helical membrane pass occupies residues 285-305 (IIFLSGCYTMVSVAYIAGFVL). Topologically, residues 306–332 (QERVVCNERFSEDGYRTVGQGTKKEGC) are extracellular. A helical membrane pass occupies residues 333 to 353 (TILFMMLYFFSMASSIWWVIL). At 354-375 (SLTWFLAAGMKWGHAAIEANSQ) the chain is on the cytoplasmic side. The chain crosses the membrane as a helical span at residues 376–396 (YFHLAAWAVPAVKTITILAMG). The Extracellular portion of the chain corresponds to 397 to 419 (QIDGDLLSGVCFVGLNRLDPLRG). The helical transmembrane segment at 420–440 (FVLAPLFVYLFIGTSFLLAGF) threads the bilayer. At 441–466 (VSLFRIRTIMKHDGTKTEPLERLMVR) the chain is on the cytoplasmic side. A helical transmembrane segment spans residues 467-487 (IGVFSVLYTVPATIVIACYFY). Residues 488-524 (EQAFREHWERSWVSQHCKSLAIPCPAHYTPRTSPDFT) are Extracellular-facing. Residues 525 to 545 (VYMIKYLMTLIVGITSGFWIW) form a helical membrane-spanning segment. At 546–570 (SGKTLHSWRKFYTRLTNSRHGETTV) the chain is on the cytoplasmic side. A Lys-Thr-X-X-X-Trp motif, mediates interaction with the PDZ domain of Dvl family members motif is present at residues 548 to 553 (KTLHSW). Residues 568 to 570 (TTV) carry the PDZ-binding motif.

This sequence belongs to the G-protein coupled receptor Fz/Smo family. Post-translationally, ubiquitinated by ZNRF3, leading to its degradation by the proteasome. As to expression, widely expressed. Most abundant in kidney, liver, uterus, ovary and heart. Lower levels seen in brain and intestine. Extremely low in calvaria, mammary glands and testis.

It localises to the membrane. Its subcellular location is the cell membrane. Receptor for Wnt proteins. Most of frizzled receptors are coupled to the beta-catenin canonical signaling pathway, which leads to the activation of disheveled proteins, inhibition of GSK-3 kinase, nuclear accumulation of beta-catenin and activation of Wnt target genes. A second signaling pathway involving PKC and calcium fluxes has been seen for some family members, but it is not yet clear if it represents a distinct pathway or if it can be integrated in the canonical pathway, as PKC seems to be required for Wnt-mediated inactivation of GSK-3 kinase. Both pathways seem to involve interactions with G-proteins. May be involved in transduction and intercellular transmission of polarity information during tissue morphogenesis and/or in differentiated tissues. Activation by Wnt5A stimulates PKC activity via a G-protein-dependent mechanism. The sequence is that of Frizzled-2 (Fzd2) from Rattus norvegicus (Rat).